Reading from the N-terminus, the 428-residue chain is Zinc-type alcohol dehydrogenase B (428 aa).

6 residues coordinate Zn(2+): cysteine 116, histidine 137, cysteine 167, cysteine 170, cysteine 173, and cysteine 181. An N6-benzoyllysine modification is found at lysine 393.

This sequence belongs to the zinc-containing alcohol dehydrogenase family. Class-III subfamily. Homodimer. It depends on Zn(2+) as a cofactor. Post-translationally, benzoylation at lys-393 by gcnE leads to the activation od adhB.

It catalyses the reaction a primary alcohol + NAD(+) = an aldehyde + NADH + H(+). It carries out the reaction a secondary alcohol + NAD(+) = a ketone + NADH + H(+). Its function is as follows. Zinc-type alcohol dehydrogenase involved in development, secondary metabolism, pathogenicity, and stress response. Specifically controls the formation of sclerotia and the biosynthesis of aflatoxin. Contribute to seed colonization of A flavus on host maize seed. This Aspergillus flavus (strain ATCC 200026 / FGSC A1120 / IAM 13836 / NRRL 3357 / JCM 12722 / SRRC 167) protein is Zinc-type alcohol dehydrogenase B.